Here is a 313-residue protein sequence, read N- to C-terminus: Ribosomal RNA small subunit methyltransferase H (313 aa).

Residues 36–38 (GGH), Asp56, Phe80, Asp102, and Gln109 each bind S-adenosyl-L-methionine.

It belongs to the methyltransferase superfamily. RsmH family.

Its subcellular location is the cytoplasm. It catalyses the reaction cytidine(1402) in 16S rRNA + S-adenosyl-L-methionine = N(4)-methylcytidine(1402) in 16S rRNA + S-adenosyl-L-homocysteine + H(+). Functionally, specifically methylates the N4 position of cytidine in position 1402 (C1402) of 16S rRNA. In Actinobacillus pleuropneumoniae serotype 3 (strain JL03), this protein is Ribosomal RNA small subunit methyltransferase H.